A 31-amino-acid polypeptide reads, in one-letter code: Cytochrome b6-f complex subunit 6 (31 aa).

Residues 4 to 24 form a helical membrane-spanning segment; it reads IISYFGFLFGALTLALILFIG.

The protein belongs to the PetL family. The 4 large subunits of the cytochrome b6-f complex are cytochrome b6, subunit IV (17 kDa polypeptide, PetD), cytochrome f and the Rieske protein, while the 4 small subunits are PetG, PetL, PetM and PetN. The complex functions as a dimer.

It is found in the plastid. The protein localises to the chloroplast thylakoid membrane. In terms of biological role, component of the cytochrome b6-f complex, which mediates electron transfer between photosystem II (PSII) and photosystem I (PSI), cyclic electron flow around PSI, and state transitions. PetL is important for photoautotrophic growth as well as for electron transfer efficiency and stability of the cytochrome b6-f complex. In Physcomitrium patens (Spreading-leaved earth moss), this protein is Cytochrome b6-f complex subunit 6.